Consider the following 5005-residue polypeptide: Bridge-like lipid transfer protein family member 1 (5005 aa).

The helical transmembrane segment at 26–46 (NVVWLLVATILSCGWIIYLTY) threads the bilayer. Disordered regions lie at residues 691–721 (LRPS…LPPD), 1218–1257 (LSLQ…SSVA), and 1269–1310 (GTKR…LKRQ). 2 stretches are compositionally biased toward low complexity: residues 700–711 (RVVSSPSTSSRP) and 1226–1240 (SHSS…SSSS). Residues 1248–1257 (GEKESPSSVA) show a composition bias toward basic and acidic residues. The segment covering 1278 to 1303 (SIPTEISGNSPVSPNTQDKSVGQSPL) has biased composition (polar residues). Phosphoserine is present on residues serine 1301, serine 1305, and serine 1323. Residue threonine 1325 is modified to Phosphothreonine. Disordered stretches follow at residues 1343-1376 (SDVS…SNSF), 1400-1427 (EFEP…QQID), 1521-1548 (TNKR…SSSF), and 1676-1704 (FSEN…QGQA). Residues serine 1355 and serine 1406 each carry the phosphoserine modification. Positions 1521–1530 (TNKRTSKSSL) are enriched in basic residues. The segment covering 1691–1704 (TEQSTIGTTNQGQA) has biased composition (polar residues). Phosphoserine is present on residues serine 1805 and serine 1808. Disordered regions lie at residues 1924-1991 (DTER…PLMP), 2401-2420 (SDQN…QDDV), and 2598-2677 (TAGS…KDVV). Composition is skewed to polar residues over residues 1931–1948 (LTSN…YNTD), 1959–1971 (TSPS…NSVS), 2401–2418 (SDQN…TSQD), and 2598–2608 (TAGSASPTPTF). Serine 2601 and serine 2603 each carry phosphoserine. Residues 2619-2638 (SDFSRSSRGSLNGGNRVNNA) are compositionally biased toward low complexity. The span at 2643 to 2665 (TNNENNKKESRNKNSLGRSERRT) shows a compositional bias: basic and acidic residues. Serine 2755 is subject to Phosphoserine. Positions 2928–2967 (RQPSTAPQPVKEDIATPLPSEKTPTSVNQTPVETNEFPQL) are disordered. A compositionally biased stretch (polar residues) spans 2949-2964 (KTPTSVNQTPVETNEF). At serine 3562 the chain carries Phosphoserine. The segment covering 3612 to 3622 (PSYSRSKSISA) has biased composition (polar residues). 6 disordered regions span residues 3612–3661 (PSYS…VTFN), 3686–3744 (SSNS…ERFY), 3821–3843 (RRSY…KKFQ), 3914–3954 (YGMK…KGKG), 4088–4146 (GTTY…SSSS), and 4325–4394 (QSAS…KAAS). The residue at position 3653 (serine 3653) is a Phosphoserine. Residues 3686-3700 (SSNSEGSCSVFSSPK) are compositionally biased toward polar residues. Acidic residues predominate over residues 3727–3736 (EDSEKDEKDE). Basic and acidic residues predominate over residues 3821–3837 (RRSYDRSSRSLDQDSPS). Composition is skewed to polar residues over residues 3931-3940 (TVQSKTNTLL) and 4098-4113 (PGGN…SASK). The span at 4122–4146 (LGSPLGRSRHSSSQSDLTSSSSSSS) shows a compositional bias: low complexity. Serine 4124 is subject to Phosphoserine. Positions 4325-4358 (QSASFTHMPQSPNVFNEHMTNSTMSPGTVGQSLK) are enriched in polar residues. The span at 4359–4372 (SPASIRSRSVSDSS) shows a compositional bias: low complexity. Residues 4381-4394 (KTSTPFNKSNKAAS) show a composition bias toward polar residues.

In terms of tissue distribution, highly expressed in testis and ovary. Weakly or not expressed in other tissues.

It is found in the cell membrane. The protein localises to the endoplasmic reticulum membrane. The protein resides in the mitochondrion membrane. Its function is as follows. Tube-forming lipid transport protein which provides phosphatidylethanolamine for glycosylphosphatidylinositol (GPI) anchor synthesis in the endoplasmic reticulum. Plays a role in endosomal trafficking and endosome recycling. Also involved in the actin cytoskeleton and cilia structural dynamics. Acts as a regulator of phagocytosis. The sequence is that of Bridge-like lipid transfer protein family member 1 from Homo sapiens (Human).